Consider the following 847-residue polypeptide: Protein SEY1 (847 aa).

Residues 1–720 (MSSGEPLSET…KRSIVQHVTQ (720 aa)) are Cytoplasmic-facing. A GB1/RHD3-type G domain is found at 55-290 (GHNYHIVAVF…VENDIFKPEY (236 aa)). GTP is bound at residue 65–72 (GSQSTGKS). A helical membrane pass occupies residues 721 to 741 (IPYYIYIIILLLGWNEFMAVV). Residues 742–744 (RNP) lie on the Lumenal side of the membrane. The helical transmembrane segment at 745–765 (FTFSLAIILGASLYILYTMNL) threads the bilayer. At 766-847 (LKPALTVTQR…VTSLNVVEEE (82 aa)) the chain is on the cytoplasmic side.

The protein belongs to the TRAFAC class dynamin-like GTPase superfamily. GB1/RHD3 GTPase family. RHD3 subfamily.

It is found in the endoplasmic reticulum membrane. In terms of biological role, cooperates with the reticulon proteins and tubule-shaping DP1 family proteins to generate and maintain the structure of the tubular endoplasmic reticulum network. Has GTPase activity, which is required for its function in ER organization. The polypeptide is Protein SEY1 (Lodderomyces elongisporus (strain ATCC 11503 / CBS 2605 / JCM 1781 / NBRC 1676 / NRRL YB-4239) (Yeast)).